We begin with the raw amino-acid sequence, 265 residues long: tRNA (guanine-N(7)-)-methyltransferase (265 aa).

Positions 1 to 16 are enriched in basic and acidic residues; sequence MNHDDPNASGVPHDDA. A disordered region spans residues 1 to 40; sequence MNHDDPNASGVPHDDANDAAPASASDAARATGHADDESSP. Residues 18-31 show a composition bias toward low complexity; it reads DAAPASASDAARAT. The S-adenosyl-L-methionine site is built by Glu95, Glu120, Asp147, and Asp170. The active site involves Asp170. Residues Lys174, Asp206, and 241–244 contribute to the substrate site; that span reads TKFE.

Belongs to the class I-like SAM-binding methyltransferase superfamily. TrmB family.

The catalysed reaction is guanosine(46) in tRNA + S-adenosyl-L-methionine = N(7)-methylguanosine(46) in tRNA + S-adenosyl-L-homocysteine. The protein operates within tRNA modification; N(7)-methylguanine-tRNA biosynthesis. In terms of biological role, catalyzes the formation of N(7)-methylguanine at position 46 (m7G46) in tRNA. This chain is tRNA (guanine-N(7)-)-methyltransferase, found in Burkholderia thailandensis (strain ATCC 700388 / DSM 13276 / CCUG 48851 / CIP 106301 / E264).